A 708-amino-acid polypeptide reads, in one-letter code: Large T antigen (708 aa).

An N-acetylmethionine; by host modification is found at M1. In terms of domain architecture, J spans 12-75 (QLMDLLGLER…VKYAHQPDFG (64 aa)). The tract at residues 63–89 (EDGVKYAHQPDFGGFWDATEIPTYGTD) is binding of LT to the CUL7 complex. Residues 103 to 107 (LFCSE) carry the LXCXE motif motif. Phosphoserine; by host is present on residues S106, S112, S120, and S123. The tract at residues 109–134 (MPSSDDEATADSQHSTPPKKKRKVED) is disordered. T124 carries the post-translational modification Phosphothreonine; by host. The Nuclear localization signal signature appears at 125 to 132 (PPKKKRKV). The segment at residues 139-254 (PSELLSFLSH…EESLPGGLKE (116 aa)) is a DNA-binding region (T-ag OBD). A T-ag D1-type zinc finger spans residues 265-357 (TKQVSWKLVT…KRVDSLQLTR (93 aa)). Zn(2+) is bound by residues C302, C305, H313, and H317. A binding to host TP53 protein region spans residues 337–672 (CQQAVDTVLA…IDSQSQGSFQ (336 aa)). In terms of domain architecture, SF3 helicase spans 400 to 560 (KMDSVVYDFL…DYLKHCLERS (161 aa)). Residues 418 to 616 (KKRYWLFKGP…FSLSVYQKMK (199 aa)) are ATPase activity. ATP is bound at residue 426 to 433 (GPIDSGKT). Residues 627–708 (DWLRNSDDDD…PPTPPPEPET (82 aa)) form a C-terminal region region. A disordered region spans residues 630–685 (RNSDDDDEDSQENADKNEDGGEKNMEDSGHETGIDSQSQGSFQAPQSSQSVHDHNQ). Position 639 is a phosphoserine; by host (S639). Over residues 642–662 (NADKNEDGGEKNMEDSGHETG) the composition is skewed to basic and acidic residues. Positions 663–679 (IDSQSQGSFQAPQSSQS) are enriched in polar residues. Residues S676, S677, and S679 each carry the phosphoserine; by host modification. Position 697 is an N6-acetyllysine; by host (K697). A CPD region spans residues 699–708 (PPTPPPEPET). A Phosphothreonine; by host modification is found at T701.

In terms of assembly, isoform large T antigen forms homohexamers in the presence of ATP. Interacts with host HDAC1. Interacts (via LXCXE domain) with host RB1; the interaction induces the aberrant dissociation of RB1-E2F1 complex thereby disrupting RB1's activity. Interacts (via LXCXE domain) with host pRB-related proteins RBL1 and RBL2. Interacts (via C-terminus) with host TOP1 and POLA1 allowing DNA replication. Interacts with host TP53, inhibiting TP53 binding to DNA. Interacts with host preinitiation complex components TBP, TFIIA and TFIID to regulate transcription initiation. LT interacts (via CPD region) with host FBW7gamma isoform (via WD repeats); seems to function as a competitive inhibitor of FBW7gamma function for physiologic substrates. LT interacts with host E3 ubiquitin ligase CUL7; this interaction seems to inhibit CUL7. Component of a SCF(CUL7)-like complex composed of SV40 Lt and host proteins CUL7, SKP1, RBX1, and FBXW8. LT interacts with host BUB1; this interaction induces activation of a DNA damage response and promotes p53 stabilization and phosphorylation. Interacts with host FAM111A and this interaction is required for efficient viral replication and sustained viral gene expression in restrictive cell types. It depends on Mg(2+) as a cofactor. In terms of processing, phosphorylated on both serine and threonine residues. Phosphorylation on Ser-120 and Ser-123 inhibits viral replication, while phosphorylation on Thr-124 enhances replication by activating the DNA-binding domain. Phosphorylation on Thr-701 is required for binding to host FBW7gamma isoform. Dephosphorylated preferentially by PP2A on Ser-120, Ser-123, Ser-677 and perhaps Ser-679. Small t antigen inhibits the dephosphorylation by the AC form of PP2A. O-Glycosylated near the C-terminal region. Post-translationally, acetylated by CBP in a TP53-dependent manner.

The protein localises to the host nucleus. The catalysed reaction is Couples ATP hydrolysis with the unwinding of duplex DNA by translocating in the 3'-5' direction.. It catalyses the reaction ATP + H2O = ADP + phosphate + H(+). With respect to regulation, DNA helicase activity is inhibited by ATP-gamma-S. Functionally, isoform large T antigen is a key early protein essential for both driving viral replication and inducing cellular transformation. Plays a role in viral genome replication by driving entry of quiescent cells into the cell cycle and by autoregulating the synthesis of viral early mRNA. Displays highly oncogenic activities by corrupting the host cellular checkpoint mechanisms that guard cell division and the transcription, replication, and repair of DNA. Participates in the modulation of cellular gene expression preceeding viral DNA replication. This step involves binding to host key cell cycle regulators retinoblastoma protein RB1/pRb and TP53. Induces the disassembly of host E2F1 transcription factors from RB1, thus promoting transcriptional activation of E2F1-regulated S-phase genes. Inhibits host TP53 binding to DNA, abrogating the ability of TP53 to stimulate gene expression. Plays the role of a TFIID-associated factor (TAF) in transcription initiation for all three RNA polymerases, by stabilizing the TBP-TFIIA complex on promoters. Initiates viral DNA replication and unwinding via interactions with the viral origin of replication. Binds two adjacent sites in the SV40 origin. The replication fork movement is facilitated by Large T antigen helicase activity. Has processive 3'-5' DNA helicase activity which requires a short 3' single-stranded region and ATP; other (d)NTPs can partially replace ATP. Activates the transcription of viral late mRNA, through host TBP and TFIIA stabilization. Interferes with histone deacetylation mediated by HDAC1, leading to activation of transcription. May inactivate the growth-suppressing properties of the E3 ubiquitin ligase CUL7. Its function is as follows. Isoform 17kT antigen targets host RBL2 for degradation and promotes cell proliferation. Transactivates host cyclin A promoter through its J domain. Unwinds G4 DNA (planar arrays of 4 guanine bases stabilized by hydrogen bonds, parallel and antiparallel arrays were tested); unwinding occurs in the 3'-5' direction, requires a 3' single-stranded end and hydrolyzable ATP. The protein is Large T antigen of Macaca (macaques).